Here is a 795-residue protein sequence, read N- to C-terminus: Protein espinas (795 aa).

Residues 30-96 (GTGLTFPPHR…FVSPLQRRHC (67 aa)) form a disordered region. The span at 52-66 (ASMSSNVASTATSSN) shows a compositional bias: low complexity. The 109-residue stretch at 135 to 243 (LDFQRNSQSD…AVRLLSDERP (109 aa)) folds into the PET domain. 3 consecutive LIM zinc-binding domains span residues 242–306 (RPCK…ETQK), 307–367 (PRCS…MFAE), and 368–430 (YCDY…GEPP). Disordered regions lie at residues 427 to 487 (GEPP…GSAG) and 616 to 684 (NRNT…EMQI). 2 stretches are compositionally biased toward basic and acidic residues: residues 459–471 (RSGD…ESSR) and 637–649 (LDNR…RFHS). Positions 650 to 662 (VQDTMSRSKSYTD) are enriched in polar residues. Over residues 666 to 675 (ARRRRRRRNQ) the composition is skewed to basic residues.

It belongs to the prickle / espinas / testin family.

The polypeptide is Protein espinas (Drosophila pseudoobscura pseudoobscura (Fruit fly)).